Reading from the N-terminus, the 561-residue chain is Urocanate hydratase (561 aa).

NAD(+) contacts are provided by residues 52-53, Gln-130, 176-178, Glu-196, Arg-201, 242-243, 263-267, 273-274, and Tyr-322; these read GG, GMG, NA, QTSAH, and YL. The active site involves Cys-410. Position 492 (Gly-492) interacts with NAD(+).

The protein belongs to the urocanase family. NAD(+) serves as cofactor.

It localises to the cytoplasm. It carries out the reaction 4-imidazolone-5-propanoate = trans-urocanate + H2O. It participates in amino-acid degradation; L-histidine degradation into L-glutamate; N-formimidoyl-L-glutamate from L-histidine: step 2/3. Catalyzes the conversion of urocanate to 4-imidazolone-5-propionate. The protein is Urocanate hydratase of Salmonella arizonae (strain ATCC BAA-731 / CDC346-86 / RSK2980).